Reading from the N-terminus, the 279-residue chain is MSNAPYDPATEGARMNFKGRMSYGDYLMLERLLDAQAPLSSAHDELLFIIQHQTSELWMKLAIHEIKAAMAAIARDDVQPAFKMLARVSRIFEQLNGAWDVLRTMTPSEYTLFRDKLGESSGFQSFQYRSIEFLLGNRNLAMLRPHAHHPELTAELESILAKPSLYDEALRLLARRGFFIGADGQRTDWRGTRAESAEVAAAWTSVYRDPQRHWELYELAEKLVDFEDYFRRWRFNHVTTVERIIGFKTGTGGTSGVNYLRKMLEIVLFPELWKLRTGL.

Substrate contacts are provided by residues 48 to 52 (FIIQH), tyrosine 110, and arginine 114. Histidine 237 is a binding site for heme. Threonine 251 is a binding site for substrate.

This sequence belongs to the tryptophan 2,3-dioxygenase family. Homotetramer. Heme serves as cofactor.

The enzyme catalyses L-tryptophan + O2 = N-formyl-L-kynurenine. It participates in amino-acid degradation; L-tryptophan degradation via kynurenine pathway; L-kynurenine from L-tryptophan: step 1/2. Its function is as follows. Heme-dependent dioxygenase that catalyzes the oxidative cleavage of the L-tryptophan (L-Trp) pyrrole ring and converts L-tryptophan to N-formyl-L-kynurenine. Catalyzes the oxidative cleavage of the indole moiety. This Bradyrhizobium sp. (strain ORS 278) protein is Tryptophan 2,3-dioxygenase.